Reading from the N-terminus, the 275-residue chain is Putative Ig-like V-type domain-containing protein FPV055 (275 aa).

2 consecutive Ig-like V-type domains span residues 25–122 (KTFV…MNLG) and 140–239 (PRRS…KSLS).

This Fowlpox virus (strain NVSL) (FPV) protein is Putative Ig-like V-type domain-containing protein FPV055.